Consider the following 80-residue polypeptide: Saposin-B-Val (80 aa).

The Saposin B-type domain maps to G1 to V80. Disulfide bonds link C4–C77, C7–C71, and C36–C47. N21 carries an N-linked (GlcNAc...) (complex) asparagine glycan.

In terms of assembly, saposin-B is a homodimer. Interacts with GRN; facilitates lysosomal delivery of progranulin from the extracellular space and the biosynthetic pathway. The one residue extended Saposin-B-Val is only found in a minority of the chains.

Its function is as follows. Saposin-B stimulates the hydrolysis of galacto-cerebroside sulfate by arylsulfatase A (EC 3.1.6.8), GM1 gangliosides by beta-galactosidase (EC 3.2.1.23) and globotriaosylceramide by alpha-galactosidase A (EC 3.2.1.22). Saposin-B forms a solubilizing complex with the substrates of the sphingolipid hydrolases. The sequence is that of Saposin-B-Val (PSAP) from Sus scrofa (Pig).